The primary structure comprises 178 residues: Ribosome maturation factor RimM (178 aa).

A PRC barrel domain is found at D101–F178.

It belongs to the RimM family. As to quaternary structure, binds ribosomal protein uS19.

The protein resides in the cytoplasm. In terms of biological role, an accessory protein needed during the final step in the assembly of 30S ribosomal subunit, possibly for assembly of the head region. Essential for efficient processing of 16S rRNA. May be needed both before and after RbfA during the maturation of 16S rRNA. It has affinity for free ribosomal 30S subunits but not for 70S ribosomes. This is Ribosome maturation factor RimM from Pseudomonas fluorescens (strain ATCC BAA-477 / NRRL B-23932 / Pf-5).